A 178-amino-acid chain; its full sequence is Transmembrane protein 196 (178 aa).

The next 4 membrane-spanning stretches (helical) occupy residues 11–31 (LLVLSVLEIGLGVSSVAVGAV), 47–67 (SSPVWSGVCFLLCGICGILCA), 73–93 (LVMILFSACCICGLIGGILNF), and 106–126 (LYPLHLASMSLACIGIGGCTL).

As to expression, expression is significantly decreased in lung cancer cells compared to normal lung tissue (at protein level).

The protein localises to the cytoplasm. Its subcellular location is the membrane. In terms of biological role, acts as a tumor suppressor in lung cancer. Inhibits tumor cell growth by inhibiting cell proliferation and migration and promoting cell apoptosis. Inhibits metastasis of lung cancer by suppressing beta-catenin expression in the Wnt/beta-catenin signaling pathway. The chain is Transmembrane protein 196 (TMEM196) from Homo sapiens (Human).